The sequence spans 63 residues: Large ribosomal subunit protein uL29 (63 aa).

This sequence belongs to the universal ribosomal protein uL29 family.

This is Large ribosomal subunit protein uL29 from Serratia proteamaculans (strain 568).